Here is an 81-residue protein sequence, read N- to C-terminus: ATP synthase subunit c, chloroplastic (81 aa).

The next 2 membrane-spanning stretches (helical) occupy residues 3–23 (PLIS…ASIG) and 57–77 (LAFM…LLFA).

The protein belongs to the ATPase C chain family. F-type ATPases have 2 components, F(1) - the catalytic core - and F(0) - the membrane proton channel. F(1) has five subunits: alpha(3), beta(3), gamma(1), delta(1), epsilon(1). F(0) has four main subunits: a(1), b(1), b'(1) and c(10-14). The alpha and beta chains form an alternating ring which encloses part of the gamma chain. F(1) is attached to F(0) by a central stalk formed by the gamma and epsilon chains, while a peripheral stalk is formed by the delta, b and b' chains.

The protein resides in the plastid. It localises to the chloroplast thylakoid membrane. F(1)F(0) ATP synthase produces ATP from ADP in the presence of a proton or sodium gradient. F-type ATPases consist of two structural domains, F(1) containing the extramembraneous catalytic core and F(0) containing the membrane proton channel, linked together by a central stalk and a peripheral stalk. During catalysis, ATP synthesis in the catalytic domain of F(1) is coupled via a rotary mechanism of the central stalk subunits to proton translocation. In terms of biological role, key component of the F(0) channel; it plays a direct role in translocation across the membrane. A homomeric c-ring of between 10-14 subunits forms the central stalk rotor element with the F(1) delta and epsilon subunits. The protein is ATP synthase subunit c, chloroplastic of Pinus koraiensis (Korean pine).